Here is a 331-residue protein sequence, read N- to C-terminus: MTTPDAFRDAEYIADVSGISYGNVANLTEQDANVVPRENERMRKLQLAAKVAFIDRLLRDLDILIYCELSALYYMDCSVILFAIRAIVQLIFFTPKAPPFDPTRNQPFIGAIFVSNIFCMIFHNFFTHPEASEATRGYLHGGLLIDFIGQKAPISLFRLFLLDFLVLILDLVMLGLIVERVKTTGQTSTTSTEILRVQDHDSEERGVHRTRPESRSSVVGAELDETDGHITRANAGVGEQAEHTQLLADPSEDGHTPGAKNSHPLDAFSSGEAVIMNLGLFDVIRDQWKYSTTAPPARTSSYIPSDQTAAFLRARFGLQVGPDGRVQRIES.

A glycan (N-linked (GlcNAc...) asparagine) is linked at Asn-26. 3 helical membrane-spanning segments follow: residues 63-83 (ILIY…ILFA), 107-127 (PFIG…NFFT), and 159-179 (LFLL…LIVE). The interval 188–225 (STTSTEILRVQDHDSEERGVHRTRPESRSSVVGAELDE) is disordered. Residues 196–214 (RVQDHDSEERGVHRTRPES) show a composition bias toward basic and acidic residues.

In terms of assembly, component of the DSC E3 ubiquitin ligase complex composed of dscA, dscB, dscC and dscD.

The protein resides in the endoplasmic reticulum membrane. Its pathway is protein modification; protein ubiquitination. Its function is as follows. Component of the DSC E3 ubiquitin ligase complex which is required for the srbA transcriptional activator proteolytic cleavage to release the soluble transcription factor from the membrane in low oxygen or sterol conditions. Required for growth during hypoxia and triazole drug susceptibility, as well as for virulence in a murine model of invasive pulmonary aspergillosis (IPA). This chain is DSC E3 ubiquitin ligase complex subunit D, found in Aspergillus fumigatus (strain ATCC MYA-4609 / CBS 101355 / FGSC A1100 / Af293) (Neosartorya fumigata).